We begin with the raw amino-acid sequence, 129 residues long: Large ribosomal subunit protein uL22 (129 aa).

It belongs to the universal ribosomal protein uL22 family. Part of the 50S ribosomal subunit.

This protein binds specifically to 23S rRNA; its binding is stimulated by other ribosomal proteins, e.g. L4, L17, and L20. It is important during the early stages of 50S assembly. It makes multiple contacts with different domains of the 23S rRNA in the assembled 50S subunit and ribosome. Its function is as follows. The globular domain of the protein is located near the polypeptide exit tunnel on the outside of the subunit, while an extended beta-hairpin is found that lines the wall of the exit tunnel in the center of the 70S ribosome. The protein is Large ribosomal subunit protein uL22 of Sinorhizobium medicae (strain WSM419) (Ensifer medicae).